Here is a 72-residue protein sequence, read N- to C-terminus: MAMNTVFLHLSEEAIKRLNKLRGWRKVSRSAILREAVEQYLERQQFPVRKAKGGRQRGETVVVDDQCKEHKE.

A disordered region spans residues 51 to 72 (AKGGRQRGETVVVDDQCKEHKE).

It belongs to the YiiE family.

This is an uncharacterized protein from Escherichia coli O6:K15:H31 (strain 536 / UPEC).